Consider the following 1521-residue polypeptide: Protein dispatched homolog 1 (1521 aa).

The span at 1–10 (MAVISGSDSV) shows a compositional bias: polar residues. Positions 1–55 (MAVISGSDSVLLSNGSISTSTSNPSPLSPSDGDLPAQHLGPRETPRTKASPNGCL) are disordered. Positions 11–35 (LLSNGSISTSTSNPSPLSPSDGDLP) are enriched in low complexity. N-linked (GlcNAc...) asparagine glycans are attached at residues Asn14 and Asn58. The helical transmembrane segment at 189–209 (VVVLGMCTLLIVVCALVGVLV) threads the bilayer. Residue Asn390 is glycosylated (N-linked (GlcNAc...) asparagine). The SSD domain occupies 485 to 657 (GIEFGIKHSL…VTWLPAVIVL (173 aa)). The next 3 helical transmembrane spans lie at 499–519 (LLMD…IMCV), 524–544 (MFIT…SYFL), and 548–568 (VFNF…LVGI). Asn581 carries an N-linked (GlcNAc...) asparagine glycan. A run of 8 helical transmembrane segments spans residues 603 to 623 (AALS…ANYV), 637 to 657 (GTAI…VIVL), 717 to 737 (YLWL…VCVN), 986 to 1006 (MGLS…NIII), 1008 to 1028 (LYAI…LVLL), 1038 to 1058 (VTIS…GVAY), 1081 to 1101 (IAMA…STVL), and 1109 to 1129 (FMML…QCLC). 2 stretches are compositionally biased toward polar residues: residues 1355–1364 (QENLGRTSTH) and 1418–1428 (TKSKVSGLPNQ). The tract at residues 1355–1440 (QENLGRTSTH…KEEKQVEPSL (86 aa)) is disordered. A glycan (N-linked (GlcNAc...) asparagine) is linked at Asn1455.

This sequence belongs to the dispatched family. Interacts with SHH; via the cholesterol anchor of the dually lipid-modified SHH (ShhNp).

Its subcellular location is the membrane. Functions in hedgehog (Hh) signaling. Regulates the release and extracellular accumulation of cholesterol-modified hedgehog proteins and is hence required for effective production of the Hh signal. Synergizes with SCUBE2 to cause an increase in SHH secretion. The polypeptide is Protein dispatched homolog 1 (Disp1) (Mus musculus (Mouse)).